Reading from the N-terminus, the 198-residue chain is Small ribosomal subunit protein uS4 (198 aa).

Positions 91-154 (SRLDNVVYRL…KNLNIVQEAL (64 aa)) constitute an S4 RNA-binding domain.

The protein belongs to the universal ribosomal protein uS4 family. In terms of assembly, part of the 30S ribosomal subunit. Contacts protein S5. The interaction surface between S4 and S5 is involved in control of translational fidelity.

One of the primary rRNA binding proteins, it binds directly to 16S rRNA where it nucleates assembly of the body of the 30S subunit. Its function is as follows. With S5 and S12 plays an important role in translational accuracy. The sequence is that of Small ribosomal subunit protein uS4 from Aster yellows witches'-broom phytoplasma (strain AYWB).